Reading from the N-terminus, the 704-residue chain is Eukaryotic translation initiation factor 2-alpha kinase 1 (704 aa).

Residues 224-667 (FEELELLGKG…LTSNLFHDLV (444 aa)) enclose the Protein kinase domain. ATP is bound by residues 230–238 (LGKGGYGSV) and Lys253. The Proton acceptor role is filled by Asp491.

It belongs to the protein kinase superfamily. Ser/Thr protein kinase family. GCN2 subfamily. In terms of processing, autophosphorylated.

It catalyses the reaction L-seryl-[protein] + ATP = O-phospho-L-seryl-[protein] + ADP + H(+). It carries out the reaction L-threonyl-[protein] + ATP = O-phospho-L-threonyl-[protein] + ADP + H(+). Mediates down-regulation of protein synthesis in response to stress conditions by the phosphorylation of the alpha subunit of eIF-2 (tif211) on 'Ser-52'. Protein synthesis is inhibited at the level of initiation. Activity is inhibited in the presence of heme. This chain is Eukaryotic translation initiation factor 2-alpha kinase 1 (hri1), found in Schizosaccharomyces pombe (strain 972 / ATCC 24843) (Fission yeast).